Here is a 53-residue protein sequence, read N- to C-terminus: UPF0391 membrane protein PputGB1_0151 (53 aa).

The next 2 helical transmembrane spans lie at 4 to 24 (WAITFLIIAIVAAVLGFGGIA) and 29 to 49 (GIAKILFIVFLVLFVASFFFG).

The protein belongs to the UPF0391 family.

The protein localises to the cell membrane. The chain is UPF0391 membrane protein PputGB1_0151 from Pseudomonas putida (strain GB-1).